The sequence spans 251 residues: Segregation and condensation protein A (251 aa).

It belongs to the ScpA family. As to quaternary structure, component of a cohesin-like complex composed of ScpA, ScpB and the Smc homodimer, in which ScpA and ScpB bind to the head domain of Smc. The presence of the three proteins is required for the association of the complex with DNA.

Its subcellular location is the cytoplasm. Its function is as follows. Participates in chromosomal partition during cell division. May act via the formation of a condensin-like complex containing Smc and ScpB that pull DNA away from mid-cell into both cell halves. In Bacillus velezensis (strain DSM 23117 / BGSC 10A6 / LMG 26770 / FZB42) (Bacillus amyloliquefaciens subsp. plantarum), this protein is Segregation and condensation protein A.